The chain runs to 235 residues: Exotoxin type C (235 aa).

The signal sequence occupies residues 1 to 27 (MKKINIIKIVFIITVILISTISPIIKS). Residues histidine 194, histidine 228, and aspartate 230 each contribute to the Zn(2+) site.

The protein belongs to the staphylococcal/streptococcal toxin family.

Superantigen that acts as a causative agent of the symptoms associated with scarlet fever. Has been associated with streptococcal toxic shock-like disease and may play a role in the early events of rheumatic fever. Superantigens cross-link major histocompatibility complex (MHC) class II and T-cell receptor (TCR) molecules, resulting in an overstimulation of T-cells associated with a massive release of pyrogenic and inflammatory cytokines. This chain is Exotoxin type C, found in Streptococcus pyogenes serotype M18 (strain MGAS8232).